The following is a 1067-amino-acid chain: Zinc finger MIZ domain-containing protein 1 (1067 aa).

The sufficient for transactivation activity; sufficient for interaction with NOTCH1 stretch occupies residues 1 to 120; that stretch reads MNSMDRHIQQ…HQKSRQSDPP (120 aa). Lys-91 is covalently cross-linked (Glycyl lysine isopeptide (Lys-Gly) (interchain with G-Cter in SUMO2)). Disordered regions lie at residues 112-141 and 327-542; these read QKSRQSDPPGKLPMQPPLSSMSSMKPTLSH and NSQF…PFPP. Residues 128-141 are compositionally biased toward low complexity; the sequence is PLSSMSSMKPTLSH. Residues 413–429 are compositionally biased toward polar residues; sequence YGNQQYGPNSQFPTQPG. The span at 431–440 shows a compositional bias: pro residues; it reads YPAPNPPRPL. The segment covering 479 to 497 has biased composition (low complexity); sequence NNTFSGSSYSNYSQGNVNR. Pro residues predominate over residues 510–521; it reads SPVPGNPTPPMT. The SP-RING-type zinc finger occupies 727–808; the sequence is GEDGVEQTAI…MWGILNAIQH (82 aa). Zn(2+) is bound by residues Cys-758, His-760, Cys-781, and Cys-784. Glycyl lysine isopeptide (Lys-Gly) (interchain with G-Cter in SUMO2) cross-links involve residues Lys-834 and Lys-843. The segment at 837 to 1067 is transactivation domain; it reads PDGIPSKRFK…DDLLSLFENN (231 aa). Pro residues predominate over residues 868–879; it reads GPSPYPLPPPPG. The disordered stretch occupies residues 868–1067; sequence GPSPYPLPPP…DDLLSLFENN (200 aa). Polar residues-rich tracts occupy residues 881 to 895 and 951 to 961; these read TNSNDYSSQGNNYQG and SSDQPHPSIQQ. The span at 981–996 shows a compositional bias: pro residues; the sequence is APPPPPSQPPRQPPQA. Residues 1040 to 1067 show a composition bias toward low complexity; it reads PDELLSYLDPPDLPSNSNDDLLSLFENN.

Interacts with AR, but not with ESR1, NR3C1, PGR, THRB nor VDR. Interacts with NOTCH1 and RBPJ. Interacts with SMARCA4. Interacts (via SP-RING-type domain) with SMAD3 and SMAD4 (via MH2 domain). In terms of tissue distribution, expressed most abundantly in ovary and, at lower levels, in prostate, spleen and testis. Weak expression, if any, in thymus, small intestine, colon and peripheral blood leukocytes.

Its subcellular location is the nucleus. The protein resides in the nucleoplasm. It is found in the cytoplasm. Its function is as follows. Acts as a transcriptional coactivator. Increases ligand-dependent transcriptional activity of AR and promotes AR sumoylation. The stimulation of AR activity is dependent upon sumoylation. Also functions as a transcriptional coactivator in the TGF-beta signaling pathway by increasing the activity of the SMAD3/SMAD4 transcriptional complex. Involved in transcriptional activation of a subset of NOTCH1 target genes including MYC. Involved in thymocyte and T cell development. Involved in the regulation of postmitotic positioning of pyramidal neurons in the developing cerebral cortex. The protein is Zinc finger MIZ domain-containing protein 1 of Homo sapiens (Human).